We begin with the raw amino-acid sequence, 299 residues long: Protoheme IX farnesyltransferase (299 aa).

A run of 8 helical transmembrane segments spans residues 25 to 45 (IVSL…PDLA), 51 to 71 (LFGT…NHLI), 97 to 117 (ALAF…FLVN), 119 to 139 (LTAW…TAFL), 147 to 167 (IVLG…AVTG), 173 to 193 (AFLL…ALAL), 225 to 245 (FLLF…LLYL), and 275 to 295 (FGYS…DHYL).

Belongs to the UbiA prenyltransferase family. Protoheme IX farnesyltransferase subfamily.

Its subcellular location is the cell inner membrane. It carries out the reaction heme b + (2E,6E)-farnesyl diphosphate + H2O = Fe(II)-heme o + diphosphate. Its pathway is porphyrin-containing compound metabolism; heme O biosynthesis; heme O from protoheme: step 1/1. Functionally, converts heme B (protoheme IX) to heme O by substitution of the vinyl group on carbon 2 of heme B porphyrin ring with a hydroxyethyl farnesyl side group. This Nitrosococcus oceani (strain ATCC 19707 / BCRC 17464 / JCM 30415 / NCIMB 11848 / C-107) protein is Protoheme IX farnesyltransferase.